A 376-amino-acid chain; its full sequence is Pregnancy-associated glycoprotein 2 (376 aa).

Residues 1–15 form the signal peptide; the sequence is MKWLVLLGLVALSEC. Asn51 and Asn71 each carry an N-linked (GlcNAc...) asparagine glycan. The Peptidase A1 domain maps to 68 to 373; sequence YVGNITIGTP…DRKNRRIGLA (306 aa). Asp86 is a catalytic residue. Cysteines 99 and 104 form a disulfide. Asn114, Asn248, and Asn252 each carry an N-linked (GlcNAc...) asparagine glycan. A disulfide bridge connects residues Cys258 and Cys262. Asp267 is an active-site residue. Residues Cys300 and Cys333 are joined by a disulfide bond. Asn343 carries N-linked (GlcNAc...) asparagine glycosylation.

Belongs to the peptidase A1 family. N-Glycosylated; the glycans terminate in either N-acetyl-galactosamine (GalNAc) or N-acetyllactosamine. Terminal GalNAc on Asn-linked glycans is greatly reduced prior to parturition while lactosamine-type N-glycans remain unaltered. In terms of tissue distribution, trophoblast and placental tissue. Localized to both the mononucleate and binucleate cells of the trophectoderm.

It is found in the secreted. It localises to the extracellular space. PAG2 or a processed derivative of this molecule might represent a factor that binds the LH receptor. This is Pregnancy-associated glycoprotein 2 (PAG2) from Bos taurus (Bovine).